The following is a 158-amino-acid chain: NAD(P)H-quinone oxidoreductase subunit N, organellar chromatophore (158 aa).

Belongs to the complex I NdhN subunit family. As to quaternary structure, NDH-1 can be composed of about 15 different subunits; different subcomplexes with different compositions have been identified which probably have different functions.

The protein localises to the plastid. It is found in the organellar chromatophore thylakoid membrane. It carries out the reaction a plastoquinone + NADH + (n+1) H(+)(in) = a plastoquinol + NAD(+) + n H(+)(out). It catalyses the reaction a plastoquinone + NADPH + (n+1) H(+)(in) = a plastoquinol + NADP(+) + n H(+)(out). In terms of biological role, NDH-1 shuttles electrons from an unknown electron donor, via FMN and iron-sulfur (Fe-S) centers, to quinones in the respiratory and/or the photosynthetic chain. The immediate electron acceptor for the enzyme in this species is believed to be plastoquinone. Couples the redox reaction to proton translocation, and thus conserves the redox energy in a proton gradient. In Paulinella chromatophora, this protein is NAD(P)H-quinone oxidoreductase subunit N, organellar chromatophore.